The primary structure comprises 424 residues: Riboflavin biosynthesis protein RibBA (424 aa).

The segment at 1-204 (MTRFDSIERA…IADLIAWRRK (204 aa)) is DHBP synthase. D-ribulose 5-phosphate is bound by residues 28-29 (RE), D33, 141-145 (RPGHT), and E165. E29 provides a ligand contact to Mg(2+). H144 serves as a coordination point for Mg(2+). The segment at 205-424 (HEKHVLRIAE…QNTAQPGTAL (220 aa)) is GTP cyclohydrolase II. Residue 259–263 (RVHSE) participates in GTP binding. The Zn(2+) site is built by C264, C275, and C277. Residues Q280, 303-305 (EGR), and T325 each bind GTP. The Proton acceptor; for GTP cyclohydrolase activity role is filled by D337. R339 acts as the Nucleophile; for GTP cyclohydrolase activity in catalysis. Positions 360 and 365 each coordinate GTP.

This sequence in the N-terminal section; belongs to the DHBP synthase family. The protein in the C-terminal section; belongs to the GTP cyclohydrolase II family. Mg(2+) is required as a cofactor. The cofactor is Mn(2+). Zn(2+) serves as cofactor.

The catalysed reaction is D-ribulose 5-phosphate = (2S)-2-hydroxy-3-oxobutyl phosphate + formate + H(+). It catalyses the reaction GTP + 4 H2O = 2,5-diamino-6-hydroxy-4-(5-phosphoribosylamino)-pyrimidine + formate + 2 phosphate + 3 H(+). The protein operates within cofactor biosynthesis; riboflavin biosynthesis; 2-hydroxy-3-oxobutyl phosphate from D-ribulose 5-phosphate: step 1/1. It functions in the pathway cofactor biosynthesis; riboflavin biosynthesis; 5-amino-6-(D-ribitylamino)uracil from GTP: step 1/4. In terms of biological role, catalyzes the conversion of D-ribulose 5-phosphate to formate and 3,4-dihydroxy-2-butanone 4-phosphate. Catalyzes the conversion of GTP to 2,5-diamino-6-ribosylamino-4(3H)-pyrimidinone 5'-phosphate (DARP), formate and pyrophosphate. The sequence is that of Riboflavin biosynthesis protein RibBA from Rhodococcus erythropolis (strain PR4 / NBRC 100887).